The primary structure comprises 597 residues: Scarecrow-like protein 5 (597 aa).

Residues 111 to 172 (ESSSGTKSHP…SPLSGSSATN (62 aa)) are disordered. The segment covering 123-169 (NNKNNSSSTTSFSSNESPISQANNNNLSRFNNHSPEENNNSPLSGSS) has biased composition (low complexity). Residues 218–597 (SMEMISRGDL…QPLITSCAWR (380 aa)) form the GRAS domain. Residues 225–285 (GDLKGVLYEC…VARLASSGSS (61 aa)) form a leucine repeat I (LRI) region. The segment at 304-369 (MHILYEACPY…GGPPNVRITG (66 aa)) is VHIID. The VHIID signature appears at 335-339 (VHIID). The interval 385-417 (LVGQRLGKLAEMCGVPFEFHGAALCCTEVEIEK) is leucine repeat II (LRII). The tract at residues 426–520 (LAVNFPLVLH…QHCLAREVVN (95 aa)) is PFYRE. The segment at 523–597 (ACEGVEREER…QPLITSCAWR (75 aa)) is SAW.

This sequence belongs to the GRAS family. Expressed in seedlings, roots, shoots, leaves, flowers and siliques.

It is found in the nucleus. Its function is as follows. Probable transcription factor involved in plant development. The protein is Scarecrow-like protein 5 (SCL5) of Arabidopsis thaliana (Mouse-ear cress).